A 137-amino-acid polypeptide reads, in one-letter code: Phosphoinositide-interacting protein (137 aa).

2 consecutive transmembrane segments (helical) span residues 56 to 76 (IVIM…TCLA) and 94 to 114 (PGFL…VPII).

As to quaternary structure, interacts with TRPV1.

The protein localises to the membrane. Its function is as follows. Regulatory subunit of TRPV1, a molecular sensor of noxious heat and capsaicin. Positively regulates TRPV1 channel activity via phosphatidylinositol 4,5-bisphosphate (PIP2). Binds various phosphoinositide, including phosphatidylinositol 4,5-bisphosphate (PIP2), but not phosphatidylinositol (PI). The polypeptide is Phosphoinositide-interacting protein (PIRT) (Homo sapiens (Human)).